The following is a 681-amino-acid chain: DNA-directed RNA polymerase subunit beta' (681 aa).

Positions 69, 71, 87, and 90 each coordinate Zn(2+). Mg(2+) is bound by residues Asp-489, Asp-491, and Asp-493.

This sequence belongs to the RNA polymerase beta' chain family. RpoC1 subfamily. In terms of assembly, in plastids the minimal PEP RNA polymerase catalytic core is composed of four subunits: alpha, beta, beta', and beta''. When a (nuclear-encoded) sigma factor is associated with the core the holoenzyme is formed, which can initiate transcription. Requires Mg(2+) as cofactor. It depends on Zn(2+) as a cofactor.

The protein localises to the plastid. It is found in the chloroplast. It catalyses the reaction RNA(n) + a ribonucleoside 5'-triphosphate = RNA(n+1) + diphosphate. Its function is as follows. DNA-dependent RNA polymerase catalyzes the transcription of DNA into RNA using the four ribonucleoside triphosphates as substrates. This is DNA-directed RNA polymerase subunit beta' from Cycas taitungensis (Prince sago).